Here is a 94-residue protein sequence, read N- to C-terminus: MDLRVIENLETELAIEIEGEDHTFMNVLKGALLELDGVTAATYDVNPEQSGGQTEPIVTIKTDGSIDPLDALEQGASRVRDKTDAFEEAFEAAA.

Belongs to the archaeal Rpo11/eukaryotic RPB11/RPC19 RNA polymerase subunit family. As to quaternary structure, part of the RNA polymerase complex.

Its subcellular location is the cytoplasm. The catalysed reaction is RNA(n) + a ribonucleoside 5'-triphosphate = RNA(n+1) + diphosphate. In terms of biological role, DNA-dependent RNA polymerase (RNAP) catalyzes the transcription of DNA into RNA using the four ribonucleoside triphosphates as substrates. In Natronomonas pharaonis (strain ATCC 35678 / DSM 2160 / CIP 103997 / JCM 8858 / NBRC 14720 / NCIMB 2260 / Gabara) (Halobacterium pharaonis), this protein is DNA-directed RNA polymerase subunit Rpo11.